The following is a 359-amino-acid chain: MENKETTTTTTTTNNGSDKKKRSLKIDLHTHILPKNWPNLKEKYGYGGWVSLDHHCSCKAKMMIDGKFFREIDSNCWDPDVRIQELNRDDVDIQVLSTVPVMFGYWAKPQDALDLAQYLNDHIAQVVSENPKRFIGLGSLPMQCTESSIQELRRCILELGLPGIQIGSNVNGKNLDDPSLFPIFEECEKLGAAVFIHPWEMVGKDRMPQYWLPWLVGMPAETCLAICSMIFGGVFQRLPNLKVCFAHGGGSFPFTIGRIEHGFNARPDLCAVVNPINPREYIGKFWVDSLVHDEEALKFLVNLMGEKKVTLGTDYPFPLGELVPGQLIESIKEFSETTKENLLGGNALEFLGLDPNKYL.

Low complexity predominate over residues 1–13 (MENKETTTTTTTT). Residues 1–21 (MENKETTTTTTTTNNGSDKKK) are disordered. Zn(2+)-binding residues include His29 and His31. Arg70 is a substrate binding site. 2 residues coordinate Zn(2+): His197 and Asp314.

It belongs to the metallo-dependent hydrolases superfamily. ACMSD family. In terms of assembly, monomer.

The enzyme catalyses 2-amino-3-carboxymuconate 6-semialdehyde + H(+) = 2-aminomuconate 6-semialdehyde + CO2. It participates in secondary metabolite metabolism; quinolate metabolism. Its function is as follows. Converts alpha-amino-beta-carboxymuconate-epsilon-semialdehyde (ACMS) to alpha-aminomuconate semialdehyde (AMS). This is 2-amino-3-carboxymuconate-6-semialdehyde decarboxylase (acmsd) from Dictyostelium discoideum (Social amoeba).